The following is a 121-amino-acid chain: Iron-sulfur cluster assembly protein CyaY (121 aa).

The protein belongs to the frataxin family.

Involved in iron-sulfur (Fe-S) cluster assembly. May act as a regulator of Fe-S biogenesis. This chain is Iron-sulfur cluster assembly protein CyaY, found in Buchnera aphidicola subsp. Schizaphis graminum (strain Sg).